A 353-amino-acid chain; its full sequence is Lysophosphatidic acid receptor 3 (353 aa).

The Extracellular segment spans residues 1–31 (MNECHYDKHMDFFYNRSNTDTVDDWTGTKLV). A glycan (N-linked (GlcNAc...) asparagine) is linked at Asn-15. Residues 32-52 (IVLCVGTFFCLFIFFSNSLVI) form a helical membrane-spanning segment. Residues 53–67 (AAVIKNRKFHFPFYY) lie on the Cytoplasmic side of the membrane. The chain crosses the membrane as a helical span at residues 68–88 (LLANLAAADFFAGIAYVFLMF). Over 89–101 (NTGPVSKTLTVNR) the chain is Extracellular. A helical transmembrane segment spans residues 102 to 124 (WFLRQGLLDSSLTASLTNLLVIA). At 125-146 (VERHMSIMRMRVHSNLTKKRVT) the chain is on the cytoplasmic side. A helical transmembrane segment spans residues 147–167 (LLILLVWAIAIFMGAVPTLGW). The Extracellular portion of the chain corresponds to 168–186 (NCLCNISACSSLAPIYSRS). An N-linked (GlcNAc...) asparagine glycan is attached at Asn-172. The chain crosses the membrane as a helical span at residues 187–207 (YLVFWTVSNLMAFLIMVVVYL). Over 208–240 (RIYVYVKRKTNVLSPHTSGSISRRRTPMKLMKT) the chain is Cytoplasmic. Residues 241–261 (VMTVLGAFVVCWTPGLVVLLL) form a helical membrane-spanning segment. The Extracellular segment spans residues 262–276 (DGLNCRQCGVQHVKR). The chain crosses the membrane as a helical span at residues 277–297 (WFLLLALLNSVVNPIIYSYKD). Over 298–353 (EDMYGTMKKMICCFSQENPERRPSRIPSTVLSRSDTGSQYIEDSISQGAVCNKSTS) the chain is Cytoplasmic. Residue Cys-309 is the site of S-palmitoyl cysteine attachment.

Belongs to the G-protein coupled receptor 1 family. Most abundantly expressed in prostate, testes, pancreas, and heart, with moderate levels in lung and ovary. No detectable expression in brain, placenta, liver, skeletal muscle, kidney, spleen, thymus, small intestine, colon, or peripheral blood leukocytes.

Its subcellular location is the cell membrane. Receptor for lysophosphatidic acid (LPA), a mediator of diverse cellular activities. May play a role in the development of ovarian cancer. Seems to be coupled to the G(i)/G(o) and G(q) families of heteromeric G proteins. This chain is Lysophosphatidic acid receptor 3 (LPAR3), found in Homo sapiens (Human).